A 283-amino-acid chain; its full sequence is MSLTMKNVEGFVIFLVIFTSTAAVPQLQKALDGREYLIETELKYNWHQAWHECARHDQQLVTIESADKNNAIIDLVKRVVGKSHNLWLGGNDEYSSSRDYGRPFFWSPTGQAFSFAYWSENNPDNYKHQEHCVHIWDTKPLYQWNDNDCNVKMGYICEPNHFRETYDQALKQKCEAIKITNSKISTEFDQLHAKQSLEFDSITQNVAKVNEDWKIEIQKLQNATQIAIQQIMENHEKKIRDLSDNLLKQLQDSNEQLKQSTDHMNASFGEKLKGQQAENNEIC.

The signal sequence occupies residues 1–23; that stretch reads MSLTMKNVEGFVIFLVIFTSTAA. One can recognise a C-type lectin domain in the interval 51 to 159; the sequence is HECARHDQQL…NVKMGYICEP (109 aa). 2 disulfide bridges follow: Cys-53–Cys-157 and Cys-132–Cys-149.

Functionally, role in the defense system of the organism against microorganisms. This lectin binds galactose. This chain is Lectin subunit alpha, found in Sarcophaga peregrina (Flesh fly).